The sequence spans 350 residues: Biotin synthase (350 aa).

Residues 38 to 257 (NKVQVSTLLS…AVARIIMPMS (220 aa)) enclose the Radical SAM core domain. [4Fe-4S] cluster is bound by residues cysteine 53, cysteine 57, and cysteine 60. [2Fe-2S] cluster-binding residues include cysteine 97, cysteine 128, cysteine 188, and arginine 260.

The protein belongs to the radical SAM superfamily. Biotin synthase family. As to quaternary structure, homodimer. [4Fe-4S] cluster is required as a cofactor. [2Fe-2S] cluster serves as cofactor.

It carries out the reaction (4R,5S)-dethiobiotin + (sulfur carrier)-SH + 2 reduced [2Fe-2S]-[ferredoxin] + 2 S-adenosyl-L-methionine = (sulfur carrier)-H + biotin + 2 5'-deoxyadenosine + 2 L-methionine + 2 oxidized [2Fe-2S]-[ferredoxin]. It functions in the pathway cofactor biosynthesis; biotin biosynthesis; biotin from 7,8-diaminononanoate: step 2/2. In terms of biological role, catalyzes the conversion of dethiobiotin (DTB) to biotin by the insertion of a sulfur atom into dethiobiotin via a radical-based mechanism. This chain is Biotin synthase, found in Photobacterium profundum (strain SS9).